We begin with the raw amino-acid sequence, 617 residues long: 1-deoxy-D-xylulose-5-phosphate synthase (617 aa).

Thiamine diphosphate is bound by residues His77 and 118 to 120 (GHS). A Mg(2+)-binding site is contributed by Asp149. Residues 150-151 (GA), Asn178, Tyr286, and Glu367 each bind thiamine diphosphate. Position 178 (Asn178) interacts with Mg(2+).

Belongs to the transketolase family. DXPS subfamily. In terms of assembly, homodimer. Mg(2+) is required as a cofactor. Thiamine diphosphate serves as cofactor.

The enzyme catalyses D-glyceraldehyde 3-phosphate + pyruvate + H(+) = 1-deoxy-D-xylulose 5-phosphate + CO2. Its pathway is metabolic intermediate biosynthesis; 1-deoxy-D-xylulose 5-phosphate biosynthesis; 1-deoxy-D-xylulose 5-phosphate from D-glyceraldehyde 3-phosphate and pyruvate: step 1/1. Functionally, catalyzes the acyloin condensation reaction between C atoms 2 and 3 of pyruvate and glyceraldehyde 3-phosphate to yield 1-deoxy-D-xylulose-5-phosphate (DXP). This is 1-deoxy-D-xylulose-5-phosphate synthase from Actinobacillus pleuropneumoniae serotype 5b (strain L20).